The following is a 254-amino-acid chain: Esterase YbfF (254 aa).

Active-site residues include Ser89 and His234.

The protein belongs to the DmpD/TodF/XylF esterase family.

In terms of biological role, displays esterase activity toward palmitoyl-CoA, malonyl-CoA and pNP-butyrate. The chain is Esterase YbfF (ybfF) from Escherichia coli (strain K12).